The primary structure comprises 672 residues: DNA ligase (672 aa).

Residues 35–39 (DAQYD), 84–85 (SL), and Glu115 contribute to the NAD(+) site. The active-site N6-AMP-lysine intermediate is the Lys117. Residues Arg138, Glu178, Lys294, and Lys318 each coordinate NAD(+). Zn(2+) contacts are provided by Cys412, Cys415, Cys430, and Cys435. Positions 592 to 672 (ATGGPFVGKS…AFLQMLQTNA (81 aa)) constitute a BRCT domain.

This sequence belongs to the NAD-dependent DNA ligase family. LigA subfamily. It depends on Mg(2+) as a cofactor. Mn(2+) serves as cofactor.

The catalysed reaction is NAD(+) + (deoxyribonucleotide)n-3'-hydroxyl + 5'-phospho-(deoxyribonucleotide)m = (deoxyribonucleotide)n+m + AMP + beta-nicotinamide D-nucleotide.. DNA ligase that catalyzes the formation of phosphodiester linkages between 5'-phosphoryl and 3'-hydroxyl groups in double-stranded DNA using NAD as a coenzyme and as the energy source for the reaction. It is essential for DNA replication and repair of damaged DNA. The polypeptide is DNA ligase (Myxococcus xanthus (strain DK1622)).